Here is a 463-residue protein sequence, read N- to C-terminus: Succinate--CoA ligase [ADP-forming] subunit beta, mitochondrial (463 aa).

Residues 1-52 (MAASMFYGRLVAVATLRNHRPRTAQRAAAQVLGSSGLFNNHGLQVQQQQQRN) constitute a mitochondrion transit peptide. The ATP-grasp domain occupies 61-288 (MELLQEAGVS…SNSAYRQKKI (228 aa)). Position 78 is an N6-acetyllysine (lysine 78). A Phosphotyrosine modification is found at tyrosine 84. Lysine 88 is modified (N6-acetyllysine; alternate). Lysine 88 carries the N6-succinyllysine; alternate modification. ATP-binding positions include lysine 98 and 105 to 107 (GRG). Lysine 129, lysine 139, lysine 143, and lysine 216 each carry N6-acetyllysine. Mg(2+)-binding residues include asparagine 258 and aspartate 272. Serine 279 carries the post-translational modification Phosphoserine. Asparagine 323 is a substrate binding site. A Phosphothreonine modification is found at threonine 341. Lysine 368 is subject to N6-acetyllysine. A substrate-binding site is contributed by 380 to 382 (GIM).

Belongs to the succinate/malate CoA ligase beta subunit family. ATP-specific subunit beta subfamily. Heterodimer of an alpha and a beta subunit. The beta subunit determines specificity for ATP. Interacts with ALAS2. Mg(2+) is required as a cofactor. Widely expressed. Not expressed in liver and lung.

Its subcellular location is the mitochondrion. The catalysed reaction is succinate + ATP + CoA = succinyl-CoA + ADP + phosphate. It functions in the pathway carbohydrate metabolism; tricarboxylic acid cycle; succinate from succinyl-CoA (ligase route): step 1/1. Its activity is regulated as follows. Inhibited by itaconate. Its function is as follows. ATP-specific succinyl-CoA synthetase functions in the citric acid cycle (TCA), coupling the hydrolysis of succinyl-CoA to the synthesis of ATP and thus represents the only step of substrate-level phosphorylation in the TCA. The beta subunit provides nucleotide specificity of the enzyme and binds the substrate succinate, while the binding sites for coenzyme A and phosphate are found in the alpha subunit. This Homo sapiens (Human) protein is Succinate--CoA ligase [ADP-forming] subunit beta, mitochondrial.